Consider the following 312-residue polypeptide: Methionyl-tRNA formyltransferase (312 aa).

109-112 serves as a coordination point for (6S)-5,6,7,8-tetrahydrofolate; it reads SLLP.

This sequence belongs to the Fmt family.

The catalysed reaction is L-methionyl-tRNA(fMet) + (6R)-10-formyltetrahydrofolate = N-formyl-L-methionyl-tRNA(fMet) + (6S)-5,6,7,8-tetrahydrofolate + H(+). Its function is as follows. Attaches a formyl group to the free amino group of methionyl-tRNA(fMet). The formyl group appears to play a dual role in the initiator identity of N-formylmethionyl-tRNA by promoting its recognition by IF2 and preventing the misappropriation of this tRNA by the elongation apparatus. This is Methionyl-tRNA formyltransferase from Anaeromyxobacter sp. (strain K).